Reading from the N-terminus, the 122-residue chain is MIQQETRLNVADNSGAKEAQCIRVLGSSGRRYAGIGDQIVVSVKSAIPSGEINKGDVSRAVVVRTAKETRREDGTYIRFDENAAVLINQEEEPVGTRVFGPVAREVREKQFMRIVSLAPEVL.

The protein belongs to the universal ribosomal protein uL14 family. In terms of assembly, part of the 50S ribosomal subunit. Forms a cluster with proteins L3 and L19. In the 70S ribosome, L14 and L19 interact and together make contacts with the 16S rRNA in bridges B5 and B8.

In terms of biological role, binds to 23S rRNA. Forms part of two intersubunit bridges in the 70S ribosome. In Salinibacter ruber (strain DSM 13855 / M31), this protein is Large ribosomal subunit protein uL14.